Consider the following 311-residue polypeptide: tRNA N6-adenosine threonylcarbamoyltransferase (311 aa).

Residues His108 and His112 each contribute to the Fe cation site. Substrate contacts are provided by residues 130–134 (LVSGG), Asp163, Gly176, Asp180, and Asn270. Position 294 (Asp294) interacts with Fe cation.

It belongs to the KAE1 / TsaD family. Requires Fe(2+) as cofactor.

It localises to the cytoplasm. The catalysed reaction is L-threonylcarbamoyladenylate + adenosine(37) in tRNA = N(6)-L-threonylcarbamoyladenosine(37) in tRNA + AMP + H(+). Functionally, required for the formation of a threonylcarbamoyl group on adenosine at position 37 (t(6)A37) in tRNAs that read codons beginning with adenine. Is involved in the transfer of the threonylcarbamoyl moiety of threonylcarbamoyl-AMP (TC-AMP) to the N6 group of A37, together with TsaE and TsaB. TsaD likely plays a direct catalytic role in this reaction. The sequence is that of tRNA N6-adenosine threonylcarbamoyltransferase from Metamycoplasma arthritidis (strain 158L3-1) (Mycoplasma arthritidis).